The primary structure comprises 265 residues: Bidirectional sugar transporter NEC1 (265 aa).

The Extracellular segment spans residues 1-8 (MAQLRADD). A helical membrane pass occupies residues 9–29 (LSFIFGLLGNIVSFMVFLAPV). Positions 11–97 (FIFGLLGNIV…SLFLFYAPRK (87 aa)) constitute a MtN3/slv 1 domain. Topologically, residues 30–44 (PTFYKIYKRKSSEGY) are cytoplasmic. The chain crosses the membrane as a helical span at residues 45–65 (QAIPYMVALFSAGLLLYYAYL). The Extracellular portion of the chain corresponds to 66 to 71 (RKNAYL). A helical membrane pass occupies residues 72–92 (IVSINGFGCAIELTYISLFLF). At 93–103 (YAPRKSKIFTG) the chain is on the cytoplasmic side. A helical transmembrane segment spans residues 104–124 (WLMLLELGALGMVMPITYLLA). Topologically, residues 125–130 (EGSHRV) are extracellular. A helical membrane pass occupies residues 131 to 151 (MIVGWICAAINVAVFAAPLSI). Residues 132–216 (IVGWICAAIN…LLYFVYKDSK (85 aa)) form the MtN3/slv 2 domain. The Cytoplasmic segment spans residues 152–164 (MRQVIKTKSVEFM). A helical transmembrane segment spans residues 165-185 (PFTLSLFLTLCATMWFFYGFF). Residues 186–190 (KKDFY) lie on the Extracellular side of the membrane. Residues 191–211 (IAFPNILGFLFGIVQMLLYFV) form a helical membrane-spanning segment. Residues 212 to 265 (YKDSKRIDDEKSDPVREATKSKEGVEIIINIEDDNSDNALQSMEKDFSRLRTSK) are Cytoplasmic-facing.

The protein belongs to the SWEET sugar transporter family. In terms of assembly, forms homooligomers and/or heterooligomers. Highly expressed in nectary tissue and weakly in the stamen, especially in stomium cells and in the upper part of the filaments.

Its subcellular location is the cell membrane. Mediates both low-affinity uptake and efflux of sugar across the plasma membrane. Promotes the formation of phloem bundles in mid-veins. Probably involved in the development of stomium cells that control anther opening time. Required for pollen viability. The sequence is that of Bidirectional sugar transporter NEC1 (NEC1) from Petunia hybrida (Petunia).